A 105-amino-acid polypeptide reads, in one-letter code: MAVAYAKLYELILKKVKDEKEAEELYNAIIEIVKEEKLAVKTELKDELRGELATKEDIKYLDGKIEMVKKELEYKLIIHTLIILFAIIITNPNAIELIKLLFGFK.

This sequence belongs to the M.jannaschii MJ0023/MJ0349/MJ1072/MJ1074/MJ1107/MJECL16 family.

This is an uncharacterized protein from Methanocaldococcus jannaschii (strain ATCC 43067 / DSM 2661 / JAL-1 / JCM 10045 / NBRC 100440) (Methanococcus jannaschii).